Consider the following 237-residue polypeptide: MANRYLHNVQGLFDTIAPNYDRMNNIISLGTHRHWRKQTMAQIHLASNAHVLDLCCGTGDWTIALAKELQAPGEVIGLDFSAPMLKLAQQKVTQQQVADRVWLRRGNAMHLPFKDNTFDLVTIGFGLRNLPDKAQALTEIYRVLKPGARLVCLETSQPDQPLIKPVWQWYFTKVVPLFGRLFAHQYQEYSYLQETTRHFASYQQLATMFQQAGFQNVHFQRFNFGAAAAHFGTKEAK.

S-adenosyl-L-methionine contacts are provided by residues Thr-58, Asp-79, and 107–108 (NA).

The protein belongs to the class I-like SAM-binding methyltransferase superfamily. MenG/UbiE family.

The catalysed reaction is a 2-demethylmenaquinol + S-adenosyl-L-methionine = a menaquinol + S-adenosyl-L-homocysteine + H(+). It participates in quinol/quinone metabolism; menaquinone biosynthesis; menaquinol from 1,4-dihydroxy-2-naphthoate: step 2/2. Its function is as follows. Methyltransferase required for the conversion of demethylmenaquinol (DMKH2) to menaquinol (MKH2). In Lactiplantibacillus plantarum (strain ATCC BAA-793 / NCIMB 8826 / WCFS1) (Lactobacillus plantarum), this protein is Demethylmenaquinone methyltransferase.